Here is a 183-residue protein sequence, read N- to C-terminus: Large ribosomal subunit protein uL5 (183 aa).

This sequence belongs to the universal ribosomal protein uL5 family. In terms of assembly, part of the 50S ribosomal subunit; part of the 5S rRNA/L5/L18/L25 subcomplex. Contacts the 5S rRNA and the P site tRNA. Forms a bridge to the 30S subunit in the 70S ribosome.

Functionally, this is one of the proteins that bind and probably mediate the attachment of the 5S RNA into the large ribosomal subunit, where it forms part of the central protuberance. In the 70S ribosome it contacts protein S13 of the 30S subunit (bridge B1b), connecting the 2 subunits; this bridge is implicated in subunit movement. Contacts the P site tRNA; the 5S rRNA and some of its associated proteins might help stabilize positioning of ribosome-bound tRNAs. This Corynebacterium aurimucosum (strain ATCC 700975 / DSM 44827 / CIP 107346 / CN-1) (Corynebacterium nigricans) protein is Large ribosomal subunit protein uL5.